The primary structure comprises 409 residues: TNF receptor-associated factor family protein DDB_G0273435/DDB_G0273505 (409 aa).

The RING-type; degenerate zinc finger occupies cysteine 20–cysteine 59. 2 TRAF-type zinc fingers span residues lysine 75–asparagine 145 and asparagine 145–serine 201. Residues histidine 221 to aspartate 250 are a coiled coil. The MATH domain maps to serine 252–isoleucine 380.

The protein belongs to the TNF receptor-associated factor family. A subfamily.

It localises to the cytoplasm. Probable adapter protein and signal transducer that links members of the tumor necrosis factor receptor family to different signaling pathways by association with the receptor cytoplasmic domain and kinases. This is TNF receptor-associated factor family protein DDB_G0273435/DDB_G0273505 from Dictyostelium discoideum (Social amoeba).